The primary structure comprises 160 residues: Large ribosomal subunit protein uL22c (160 aa).

This sequence belongs to the universal ribosomal protein uL22 family. Part of the 50S ribosomal subunit.

It localises to the plastid. The protein resides in the chloroplast. Functionally, this protein binds specifically to 23S rRNA. Its function is as follows. The globular domain of the protein is located near the polypeptide exit tunnel on the outside of the subunit, while an extended beta-hairpin is found that lines the wall of the exit tunnel in the center of the 70S ribosome. The protein is Large ribosomal subunit protein uL22c (rpl22) of Crucihimalaya wallichii (Rock-cress).